Reading from the N-terminus, the 69-residue chain is Protein hunchback (69 aa).

3 C2H2-type zinc fingers span residues 1–11 (KHHLEYHLRNH), 17–39 (FKCE…LKSH), and 45–69 (YRCA…KYSH).

Belongs to the hunchback C2H2-type zinc-finger protein family.

It is found in the nucleus. Its function is as follows. Gap class segmentation protein that controls development of head structures. The sequence is that of Protein hunchback (hb) from Apis mellifera (Honeybee).